A 269-amino-acid chain; its full sequence is uncharacterized protein (269 aa).

The stretch at 3-66 (VDQAAIDEIL…QNLQNLAEGA (64 aa)) forms a coiled coil. The disordered stretch occupies residues 83–142 (AQIPEPPKPEPEVEQPETETGPEPEPEAEPELKEVKEDEPPEEDVVRELDESKSAEPIPE). A compositionally biased stretch (acidic residues) spans 94-111 (EVEQPETETGPEPEPEAE). Residues 112 to 136 (PELKEVKEDEPPEEDVVRELDESKS) are compositionally biased toward basic and acidic residues.

This is an uncharacterized protein from Archaeoglobus fulgidus (strain ATCC 49558 / DSM 4304 / JCM 9628 / NBRC 100126 / VC-16).